A 457-amino-acid chain; its full sequence is UDP-glycosyltransferase 74C1 (457 aa).

Residues threonine 281, 336-338 (VPQ), 353-361 (HCGWNSTLE), and 375-378 (WTDQ) contribute to the UDP-alpha-D-glucose site.

It belongs to the UDP-glycosyltransferase family.

The protein is UDP-glycosyltransferase 74C1 (UGT74C1) of Arabidopsis thaliana (Mouse-ear cress).